Consider the following 381-residue polypeptide: E3 ubiquitin-protein ligase RNF133 (381 aa).

Residues 65–167 (SSILKRVAGV…VKGMEILHLI (103 aa)) form the PA domain. Residues 186 to 208 (WLNHYFVSFMIVTTATLAYFTFY) traverse the membrane as a helical segment. The RING-type; atypical zinc finger occupies 256–297 (CVICFEAYKPNEIVRILTCKHFFHKNCIDPWILAHGTCPMCK). Residues 340–381 (LPPARTSSKVTHVQEHPTSVNVGSQPPEAEETGHPSFGQHDL) are disordered. Positions 344–363 (RTSSKVTHVQEHPTSVNVGS) are enriched in polar residues.

Interacts with E3 ligase UBE2J1. Post-translationally, auto-ubiquitinated.

The protein localises to the endoplasmic reticulum membrane. It carries out the reaction S-ubiquitinyl-[E2 ubiquitin-conjugating enzyme]-L-cysteine + [acceptor protein]-L-lysine = [E2 ubiquitin-conjugating enzyme]-L-cysteine + N(6)-ubiquitinyl-[acceptor protein]-L-lysine.. It participates in protein modification; protein ubiquitination. In terms of biological role, has E3 ubiquitin-protein ligase activity. Plays a role in male fecundity through the interaction with the E2 ubituitin-protein ligase UBE2J1. The polypeptide is E3 ubiquitin-protein ligase RNF133 (Rnf133) (Rattus norvegicus (Rat)).